We begin with the raw amino-acid sequence, 46 residues long: Photosystem II reaction center protein K (46 aa).

Residues 1–9 (MSTLPILLA) constitute a propeptide that is removed on maturation. Residues 25 to 45 (LPSIPVLFLLLAFVWQAAVSF) traverse the membrane as a helical segment.

It belongs to the PsbK family. In terms of assembly, PSII is composed of 1 copy each of membrane proteins PsbA, PsbB, PsbC, PsbD, PsbE, PsbF, PsbH, PsbI, PsbJ, PsbK, PsbL, PsbM, PsbT, PsbX, PsbY, PsbZ, Psb30/Ycf12, at least 3 peripheral proteins of the oxygen-evolving complex and a large number of cofactors. It forms dimeric complexes.

It is found in the plastid. It localises to the chloroplast thylakoid membrane. Functionally, one of the components of the core complex of photosystem II (PSII). PSII is a light-driven water:plastoquinone oxidoreductase that uses light energy to abstract electrons from H(2)O, generating O(2) and a proton gradient subsequently used for ATP formation. It consists of a core antenna complex that captures photons, and an electron transfer chain that converts photonic excitation into a charge separation. The polypeptide is Photosystem II reaction center protein K (Nephroselmis olivacea (Green alga)).